We begin with the raw amino-acid sequence, 244 residues long: Demethylmenaquinone methyltransferase (244 aa).

S-adenosyl-L-methionine-binding positions include Thr65, Asp86, and 114–115 (DA).

It belongs to the class I-like SAM-binding methyltransferase superfamily. MenG/UbiE family.

The enzyme catalyses a 2-demethylmenaquinol + S-adenosyl-L-methionine = a menaquinol + S-adenosyl-L-homocysteine + H(+). It functions in the pathway quinol/quinone metabolism; menaquinone biosynthesis; menaquinol from 1,4-dihydroxy-2-naphthoate: step 2/2. Functionally, methyltransferase required for the conversion of demethylmenaquinol (DMKH2) to menaquinol (MKH2). The sequence is that of Demethylmenaquinone methyltransferase from Lactobacillus johnsonii (strain CNCM I-12250 / La1 / NCC 533).